The primary structure comprises 398 residues: 8-amino-7-oxononanoate synthase (398 aa).

Residue arginine 23 coordinates substrate. Residue 110 to 111 (GY) participates in pyridoxal 5'-phosphate binding. Position 135 (histidine 135) interacts with substrate. Pyridoxal 5'-phosphate contacts are provided by serine 181, histidine 209, and threonine 237. Residue lysine 240 is modified to N6-(pyridoxal phosphate)lysine. Threonine 354 serves as a coordination point for substrate.

The protein belongs to the class-II pyridoxal-phosphate-dependent aminotransferase family. BioF subfamily. Homodimer. Pyridoxal 5'-phosphate is required as a cofactor.

It carries out the reaction 6-carboxyhexanoyl-[ACP] + L-alanine + H(+) = (8S)-8-amino-7-oxononanoate + holo-[ACP] + CO2. Its pathway is cofactor biosynthesis; biotin biosynthesis. In terms of biological role, catalyzes the decarboxylative condensation of pimeloyl-[acyl-carrier protein] and L-alanine to produce 8-amino-7-oxononanoate (AON), [acyl-carrier protein], and carbon dioxide. The polypeptide is 8-amino-7-oxononanoate synthase (Anaeromyxobacter dehalogenans (strain 2CP-1 / ATCC BAA-258)).